Reading from the N-terminus, the 329-residue chain is uncharacterized protein (329 aa).

The next 10 helical transmembrane spans lie at 9–29 (LMGL…NVIV), 53–73 (SHSF…MALI), 105–125 (FLMF…PTGI), 126–146 (AITL…RLFN), 154–174 (WLVI…AYGG), 179–199 (LVLG…YTVF), 210–230 (VPFT…CLII), 240–260 (WLAI…GHVL), 273–293 (AAII…LAIQ), and 296–316 (LTNI…LLNY). 2 consecutive EamA domains span residues 103 to 169 (CGFL…LTIP) and 191 to 316 (IVYA…LLNY).

It belongs to the EamA transporter family.

The protein resides in the cell membrane. This is an uncharacterized protein from Synechocystis sp. (strain ATCC 27184 / PCC 6803 / Kazusa).